A 711-amino-acid chain; its full sequence is Long-chain-fatty-acid--CoA ligase 4 (711 aa).

The chain crosses the membrane as a helical; Signal-anchor for type III membrane protein span at residues 8-28; that stretch reads LTIVLLPVHLLITIYSALIFI. Residues 29–711 lie on the Cytoplasmic side of the membrane; the sequence is PWYFLTNAKK…KDIERMYGGK (683 aa). A Phosphoserine modification is found at Ser-447.

It belongs to the ATP-dependent AMP-binding enzyme family. Requires Mg(2+) as cofactor.

It is found in the mitochondrion outer membrane. The protein localises to the peroxisome membrane. Its subcellular location is the microsome membrane. It localises to the endoplasmic reticulum membrane. The protein resides in the cell membrane. It carries out the reaction a long-chain fatty acid + ATP + CoA = a long-chain fatty acyl-CoA + AMP + diphosphate. It catalyses the reaction (5Z,8Z,11Z,14Z)-eicosatetraenoate + ATP + CoA = (5Z,8Z,11Z,14Z)-eicosatetraenoyl-CoA + AMP + diphosphate. The enzyme catalyses 15-hydroxy-(5Z,8Z,11Z,13E)-eicosatetraenoate + ATP + CoA = 15-hydroxy-(5Z,8Z,11Z,13E)-eicosatetraenoyl-CoA + AMP + diphosphate. The catalysed reaction is 12-hydroxy-(5Z,8Z,10E,14Z)-eicosatetraenoate + ATP + CoA = 12-hydroxy-(5Z,8Z,10E,14Z)-eicosatetraenoyl-CoA + AMP + diphosphate. It carries out the reaction 5-hydroxy-(6E,8Z,11Z,14Z)-eicosatetraenoate + ATP + CoA = 5-hydroxy-(6E,8Z,11Z,14Z)-eicosatetraenoyl-CoA + AMP + diphosphate. It catalyses the reaction 5,6-epoxy-(8Z,11Z,14Z)-eicosatrienoate + ATP + CoA = 5,6-epoxy-(8Z,11Z,14Z)-eicosatrienoyl-CoA + AMP + diphosphate. The enzyme catalyses 14,15-epoxy-(5Z,8Z,11Z)-eicosatrienoate + ATP + CoA = 14,15-epoxy-(5Z,8Z,11Z)-eicosatrienoyl-CoA + AMP + diphosphate. The catalysed reaction is 11,12-epoxy-(5Z,8Z,14Z)-eicosatrienoate + ATP + CoA = 11,12-epoxy-(5Z,8Z,14Z)-eicosatrienoyl-CoA + AMP + diphosphate. It carries out the reaction 8,9-epoxy-(5Z,11Z,14Z)-eicosatrienoate + ATP + CoA = 8,9-epoxy-(5Z,11Z,14Z)-eicosatrienoyl-CoA + AMP + diphosphate. It catalyses the reaction hexadecanoate + ATP + CoA = hexadecanoyl-CoA + AMP + diphosphate. The enzyme catalyses (E)-hexadec-2-enoate + ATP + CoA = (2E)-hexadecenoyl-CoA + AMP + diphosphate. With respect to regulation, both triacsin C and rosiglitazone inhibit arachidonoyl-CoA ligase activity. Catalyzes the conversion of long-chain fatty acids to their active form acyl-CoA for both synthesis of cellular lipids, and degradation via beta-oxidation. Preferentially activates arachidonate and eicosapentaenoate as substrates. Preferentially activates 8,9-EET &gt; 14,15-EET &gt; 5,6-EET &gt; 11,12-EET. Modulates glucose-stimulated insulin secretion by regulating the levels of unesterified EETs. Modulates prostaglandin E2 secretion. This chain is Long-chain-fatty-acid--CoA ligase 4 (Acsl4), found in Rattus norvegicus (Rat).